The primary structure comprises 1315 residues: DNA-directed RNA polymerase subunit beta' (1315 aa).

The Zn(2+) site is built by Cys60, Cys62, Cys75, and Cys78. Mg(2+) contacts are provided by Asp535, Asp537, and Asp539. Zn(2+) is bound by residues Cys890, Cys967, Cys974, and Cys977.

It belongs to the RNA polymerase beta' chain family. As to quaternary structure, the RNAP catalytic core consists of 2 alpha, 1 beta, 1 beta' and 1 omega subunit. When a sigma factor is associated with the core the holoenzyme is formed, which can initiate transcription. The cofactor is Mg(2+). Requires Zn(2+) as cofactor.

The enzyme catalyses RNA(n) + a ribonucleoside 5'-triphosphate = RNA(n+1) + diphosphate. Its function is as follows. DNA-dependent RNA polymerase catalyzes the transcription of DNA into RNA using the four ribonucleoside triphosphates as substrates. The chain is DNA-directed RNA polymerase subunit beta' from Mycobacterium sp. (strain MCS).